A 192-amino-acid polypeptide reads, in one-letter code: UPF0301 protein BTH_I1462 (192 aa).

This sequence belongs to the UPF0301 (AlgH) family.

This Burkholderia thailandensis (strain ATCC 700388 / DSM 13276 / CCUG 48851 / CIP 106301 / E264) protein is UPF0301 protein BTH_I1462.